The primary structure comprises 213 residues: Orotate phosphoribosyltransferase (213 aa).

K26 contributes to the 5-phospho-alpha-D-ribose 1-diphosphate binding site. 34 to 35 serves as a coordination point for orotate; it reads FF. 5-phospho-alpha-D-ribose 1-diphosphate contacts are provided by residues 72 to 73, R99, K100, K103, H105, and 124 to 132; these read YK and DDVITAGTA. Orotate-binding residues include T128 and R156.

Belongs to the purine/pyrimidine phosphoribosyltransferase family. PyrE subfamily. As to quaternary structure, homodimer. It depends on Mg(2+) as a cofactor.

It carries out the reaction orotidine 5'-phosphate + diphosphate = orotate + 5-phospho-alpha-D-ribose 1-diphosphate. Its pathway is pyrimidine metabolism; UMP biosynthesis via de novo pathway; UMP from orotate: step 1/2. In terms of biological role, catalyzes the transfer of a ribosyl phosphate group from 5-phosphoribose 1-diphosphate to orotate, leading to the formation of orotidine monophosphate (OMP). The polypeptide is Orotate phosphoribosyltransferase (Shigella sonnei (strain Ss046)).